The sequence spans 393 residues: Eukaryotic translation initiation factor 5 (393 aa).

Position 28 to 35 (28 to 35 (GKGNGIKT)) interacts with GTP. Disordered stretches follow at residues 144–179 (KAVS…DEED) and 217–247 (EPQS…SISS). One can recognise a W2 domain in the interval 223 to 385 (EEQDEDDEQE…ETAEEEEEDE (163 aa)). A compositionally biased stretch (acidic residues) spans 224–233 (EQDEDDEQEE).

It belongs to the eIF-2-beta/eIF-5 family.

Functionally, catalyzes the hydrolysis of GTP bound to the 40S ribosomal initiation complex (40S.mRNA.Met-tRNA[F].eIF-2.GTP) with the subsequent joining of a 60S ribosomal subunit resulting in the release of eIF-2 and the guanine nucleotide. The subsequent joining of a 60S ribosomal subunit results in the formation of a functional 80S initiation complex (80S.mRNA.Met-tRNA[F]). This Dictyostelium discoideum (Social amoeba) protein is Eukaryotic translation initiation factor 5 (eif5).